A 605-amino-acid chain; its full sequence is Arginyl-tRNA--protein transferase 2 (605 aa).

Positions 496–513 (KVSSSSSSPQASETLLES) are enriched in low complexity. The interval 496–549 (KVSSSSSSPQASETLLESTSEHEDMEQGDTNDDDDEMYNSDEDSDSDSSSSRNR) is disordered. Residues 518-541 (EDMEQGDTNDDDDEMYNSDEDSDS) are compositionally biased toward acidic residues.

The protein belongs to the R-transferase family.

The catalysed reaction is an N-terminal L-alpha-aminoacyl-[protein] + L-arginyl-tRNA(Arg) = an N-terminal L-arginyl-L-aminoacyl-[protein] + tRNA(Arg) + H(+). Functionally, involved in the post-translational conjugation of arginine to the N-terminal aspartate or glutamate of a protein. This arginylation is required for degradation of the protein via the ubiquitin pathway. Component of the N-end rule pathway with ATE1 and PRT6. The N-end rule pathway regulates seed after-ripening, seedling sugar sensitivity, seedling lipid breakdown, and abscisic acid (ABA) sensitivity of germination. The end-rule pathway regulates various aspects of leaf and shoot development. Involved in the oxygen-dependent N-arginylation of RAP2-12, an activator of hypoxic gene expression. This N-terminal modification leads to ubiquitination by PRT6 and subsequent degradation of RAP2-12 under aerobic conditions. Involved in disease resistance. The end-rule pathway plays a role in regulating the timing and amplitude of the immune response following infection with the bacterial pathogen Pseudomonas syringae pv tomato. Regulates the biosynthesis of plant-defense metabolites such as glucosinolates, and the biosynthesis and response to the phytohormone jasmonate (JA), which plays a key role in plant immunity. This Arabidopsis thaliana (Mouse-ear cress) protein is Arginyl-tRNA--protein transferase 2.